The primary structure comprises 184 residues: dTTP/UTP pyrophosphatase (184 aa).

The active-site Proton acceptor is Asp67.

Belongs to the Maf family. YhdE subfamily. A divalent metal cation serves as cofactor.

It is found in the cytoplasm. The enzyme catalyses dTTP + H2O = dTMP + diphosphate + H(+). It carries out the reaction UTP + H2O = UMP + diphosphate + H(+). Its function is as follows. Nucleoside triphosphate pyrophosphatase that hydrolyzes dTTP and UTP. May have a dual role in cell division arrest and in preventing the incorporation of modified nucleotides into cellular nucleic acids. The chain is dTTP/UTP pyrophosphatase from Elusimicrobium minutum (strain Pei191).